Consider the following 342-residue polypeptide: Succinylglutamate desuccinylase (342 aa).

The Zn(2+) site is built by His-64, Glu-67, and His-159. Glu-222 is an active-site residue.

The protein belongs to the AspA/AstE family. Succinylglutamate desuccinylase subfamily. Zn(2+) is required as a cofactor.

The enzyme catalyses N-succinyl-L-glutamate + H2O = L-glutamate + succinate. It functions in the pathway amino-acid degradation; L-arginine degradation via AST pathway; L-glutamate and succinate from L-arginine: step 5/5. Transforms N(2)-succinylglutamate into succinate and glutamate. The protein is Succinylglutamate desuccinylase of Burkholderia orbicola (strain MC0-3).